The chain runs to 175 residues: DELTA-stichotoxin-Hcr4a (175 aa).

A plays an important role in the hemolytic activity region spans residues 1–10 (ALAGAIIAGA). Residues 9–28 (GASLTFQILDKVLAELGQVS) form an N-terminal region region. The phosphocholine site is built by Ser52, Val85, Ser103, Pro105, Tyr131, Tyr135, and Tyr136. The segment at 103 to 118 (SVPFDYNLYSNWWDVK) is trp-rich region, which is important for the binding to lipid membrane.

This sequence belongs to the actinoporin family. Sea anemone subfamily. As to quaternary structure, octamer or nonamer in membranes. Monomer in the soluble state.

The protein resides in the secreted. Its subcellular location is the nematocyst. It localises to the target cell membrane. Its function is as follows. Pore-forming protein that forms cations-selective hydrophilic pores of around 1 nm and causes cardiac stimulation and cytolysis. Pore formation is a multi-step process that involves specific recognition of membrane sphingomyelin (but neither cholesterol nor phosphatidylcholine) using aromatic rich region and adjacent phosphocholine (POC) binding site, firm binding to the membrane (mainly driven by hydrophobic interactions) accompanied by the transfer of the N-terminal region to the lipid-water interface and finally pore formation after oligomerization of monomers. This is DELTA-stichotoxin-Hcr4a from Radianthus crispa (Leathery sea anemone).